The chain runs to 439 residues: uncharacterized protein (439 aa).

An N-terminal signal peptide occupies residues 1 to 19; it reads MKKLLLTASIICLASAGLA.

This is an uncharacterized protein from Rickettsia felis (strain ATCC VR-1525 / URRWXCal2) (Rickettsia azadi).